A 247-amino-acid chain; its full sequence is Diglucosylglycerate octanoyltransferase (247 aa).

The protein belongs to the OctT acyltransferase family. Homotetramer.

It carries out the reaction (2R)-2-O-[alpha-D-glucopyranosyl-(1-&gt;6)-alpha-D-glucopyranosyl]-glycerate + octanoyl-CoA = (2R)-2-O-[6-O-octanoyl-alpha-D-glucopyranosyl-(1-&gt;6)-alpha-D-glucopyranosyl]-glycerate + CoA. Functionally, sugar octanoyltransferase likely involved in the biosynthesis of mycobacterial methylglucose lipopolysaccharide (MGLP). Catalyzes the transfer of an octanoyl group from octanoyl-CoA to the C6 OH of the second glucose in diglucosylglycerate (DGG). DGG is the preferred acceptor, but to a lesser extent, GG (glucosylglycerate) can also be used as substrate. DGG and GG are the two earliest intermediates in MGLP biosynthesis. This chain is Diglucosylglycerate octanoyltransferase, found in Mycobacterium tuberculosis (strain ATCC 25618 / H37Rv).